Here is a 185-residue protein sequence, read N- to C-terminus: Mitochondrial inner membrane protease atp23 (185 aa).

A divalent metal cation is bound at residue H86. Residue E87 is part of the active site. H90 lines the a divalent metal cation pocket.

It belongs to the peptidase M76 family.

The protein resides in the mitochondrion inner membrane. In terms of biological role, has a dual role in the assembly of mitochondrial ATPase. Acts as a protease that removes N-terminal residues of mitochondrial ATPase CF(0) subunit 6 at the intermembrane space side. Also involved in the correct assembly of the membrane-embedded ATPase CF(0) particle, probably mediating association of subunit 6 with the subunit 9 ring. This is Mitochondrial inner membrane protease atp23 (atp23) from Schizosaccharomyces pombe (strain 972 / ATCC 24843) (Fission yeast).